We begin with the raw amino-acid sequence, 377 residues long: MTTRLYLSPTPPRNDREGASKSTSASIKHDAYLPPADGNRVLVDRFGRIARDLRVSLTDRCNLRCTYCMPAEGLEWLPTEQTLNDAEVLRLIRIAVVKLGIRQIRFTGGEPLLRKNLEDIIAGTAALRTDEGEKVHIALTTNGLGLDKRIAGLKEAGLDRVNISLDTIDAERYVSLTRRDRLSGVLASIDAAVAAGLHPVKINAVVMPGVNEVDIVPLAEYCISKGSQLRFIEQMPLGPREQWKRGDMVTAEEILARLEEKFTLSPAKEPRGAAPAALWNVVDKSNPDITGQIGIIASVTHPFCGDCDRSRLTTDGTIRNCLFSRTETPLRDALRDGASDDELAQLWAGAMWEKKPGHGIDDEGFLQPDRPMSAIGG.

Positions 1 to 29 (MTTRLYLSPTPPRNDREGASKSTSASIKH) are disordered. The Radical SAM core domain occupies 45–271 (RFGRIARDLR…FTLSPAKEPR (227 aa)). Residue R54 participates in GTP binding. [4Fe-4S] cluster is bound by residues C61 and C65. Residue Y67 participates in S-adenosyl-L-methionine binding. C68 serves as a coordination point for [4Fe-4S] cluster. Residue R105 participates in GTP binding. G109 is an S-adenosyl-L-methionine binding site. Residue T140 participates in GTP binding. Residue S164 participates in S-adenosyl-L-methionine binding. K201 is a binding site for GTP. M235 serves as a coordination point for S-adenosyl-L-methionine. [4Fe-4S] cluster-binding residues include C304 and C307. 309-311 (RSR) lines the GTP pocket. [4Fe-4S] cluster is bound at residue C321.

The protein belongs to the radical SAM superfamily. MoaA family. Monomer and homodimer. [4Fe-4S] cluster serves as cofactor.

The enzyme catalyses GTP + AH2 + S-adenosyl-L-methionine = (8S)-3',8-cyclo-7,8-dihydroguanosine 5'-triphosphate + 5'-deoxyadenosine + L-methionine + A + H(+). It functions in the pathway cofactor biosynthesis; molybdopterin biosynthesis. Functionally, catalyzes the cyclization of GTP to (8S)-3',8-cyclo-7,8-dihydroguanosine 5'-triphosphate. This Corynebacterium glutamicum (strain ATCC 13032 / DSM 20300 / JCM 1318 / BCRC 11384 / CCUG 27702 / LMG 3730 / NBRC 12168 / NCIMB 10025 / NRRL B-2784 / 534) protein is GTP 3',8-cyclase.